A 501-amino-acid chain; its full sequence is Cytokinin dehydrogenase 2 (501 aa).

The first 22 residues, 1 to 22 (MANLRLMITLITVLMITKSSNG), serve as a signal peptide directing secretion. N-linked (GlcNAc...) asparagine glycans are attached at residues N32 and N51. The FAD-binding PCMH-type domain occupies 53 to 226 (TTVTPGGVIC…TRARIVLDHA (174 aa)). Residues A87, G89, and G91 each coordinate FAD. The residue at position 92 (H92) is a Pros-8alpha-FAD histidine. FAD is bound by residues S93 and Q97. A glycan (N-linked (GlcNAc...) asparagine) is linked at N107. Residues D150, T155, S161, I165, I216, Y460, S495, and Q498 each contribute to the FAD site.

Belongs to the oxygen-dependent FAD-linked oxidoreductase family. It depends on FAD as a cofactor. In terms of tissue distribution, expressed in the shoot apex, in stipules, and occasionally in the most apical part of the inflorescence stems. Not detected in roots.

Its subcellular location is the endoplasmic reticulum. It is found in the secreted. The protein localises to the extracellular space. It carries out the reaction N(6)-dimethylallyladenine + A + H2O = 3-methyl-2-butenal + adenine + AH2. In terms of biological role, catalyzes the oxidation of cytokinins, a family of N(6)-substituted adenine derivatives that are plant hormones, where the substituent is an isopentenyl group. Modulates asymmetric cytokinin signaling in emerged lateral roots. Its activity determines cell elongation and number in emerged lateral roots and defines angular growth of lateral roots. The polypeptide is Cytokinin dehydrogenase 2 (CKX2) (Arabidopsis thaliana (Mouse-ear cress)).